The primary structure comprises 348 residues: A-type ATP synthase subunit C (348 aa).

This sequence belongs to the V-ATPase V0D/AC39 subunit family. In terms of assembly, has multiple subunits with at least A(3), B(3), C, D, E, F, H, I and proteolipid K(x).

It localises to the cell membrane. Component of the A-type ATP synthase that produces ATP from ADP in the presence of a proton gradient across the membrane. This is A-type ATP synthase subunit C from Haloferax volcanii (strain ATCC 29605 / DSM 3757 / JCM 8879 / NBRC 14742 / NCIMB 2012 / VKM B-1768 / DS2) (Halobacterium volcanii).